Consider the following 398-residue polypeptide: Elongation factor Tu (398 aa).

Residues 10-207 (KPHVNIGTIG…TVDSYIPEPE (198 aa)) form the tr-type G domain. The segment at 19–26 (GHVDHGKT) is G1. 19–26 (GHVDHGKT) contributes to the GTP binding site. Thr-26 is a Mg(2+) binding site. Positions 63–67 (GITIN) are G2. Residues 84–87 (DAPG) are G3. GTP-binding positions include 84–88 (DAPGH) and 139–142 (NKVD). Residues 139-142 (NKVD) form a G4 region. A G5 region spans residues 177-179 (SAL).

Belongs to the TRAFAC class translation factor GTPase superfamily. Classic translation factor GTPase family. EF-Tu/EF-1A subfamily. As to quaternary structure, monomer.

It localises to the cytoplasm. It catalyses the reaction GTP + H2O = GDP + phosphate + H(+). Functionally, GTP hydrolase that promotes the GTP-dependent binding of aminoacyl-tRNA to the A-site of ribosomes during protein biosynthesis. This chain is Elongation factor Tu, found in Streptococcus pyogenes serotype M1.